A 655-amino-acid chain; its full sequence is uncharacterized protein (655 aa).

The region spanning 245-469 is the PE-PPE domain; sequence PGVIAQALFT…NLKVIVNLGY (225 aa).

The protein belongs to the mycobacterial PPE family.

This is an uncharacterized protein from Mycobacterium tuberculosis (strain ATCC 25618 / H37Rv).